The following is a 529-amino-acid chain: Listeriolysin O (529 aa).

An N-terminal signal peptide occupies residues Met1 to Ala24. A run of 4 beta stranded transmembrane segments spans residues Glu214–Ala227, Val234–Lys243, Ser312–Ala321, and Ser329–Ser341. The short motif at Glu483 to Arg493 is the Conserved undecapeptide element. Positions Thr515–Leu516 match the Cholesterol binding motif.

Belongs to the cholesterol-dependent cytolysin family. As to quaternary structure, homooligomeric pore complex of 35 to 50 subunits; when inserted in the host membrane.

The protein localises to the secreted. It localises to the host membrane. The protein resides in the host cell membrane. Activity of listeriolysin O is regulated on multiple levels. It should be high in the phagosome, thereby allowing escape of the bacteria from the phagosomal compartment. Then, once inside the host cytosol, the activity must be controlled to prevent lysis of the host plasma membrane and loss of the intracellular environment. A cholesterol-dependent toxin that causes cytolysis by forming pores in cholesterol containing host membranes. After binding to target membranes, the protein undergoes a major conformation change, leading to its insertion in the host membrane and formation of an oligomeric pore complex. Cholesterol is required for binding to host membranes, membrane insertion and pore formation; cholesterol binding is mediated by a Thr-Leu pair in the C-terminus. Acts as a major virulence factor required for the escape of bacteria from phagosomal vacuoles and entry into the host cytosol. Can be reversibly inactivated by oxidation. The protein is Listeriolysin O (hly) of Listeria monocytogenes serotype 4b (strain F2365).